A 434-amino-acid chain; its full sequence is Glutamate-1-semialdehyde 2,1-aminomutase (434 aa).

Lys266 carries the N6-(pyridoxal phosphate)lysine modification.

Belongs to the class-III pyridoxal-phosphate-dependent aminotransferase family. HemL subfamily. Homodimer. It depends on pyridoxal 5'-phosphate as a cofactor.

It localises to the cytoplasm. It carries out the reaction (S)-4-amino-5-oxopentanoate = 5-aminolevulinate. The protein operates within porphyrin-containing compound metabolism; protoporphyrin-IX biosynthesis; 5-aminolevulinate from L-glutamyl-tRNA(Glu): step 2/2. The protein is Glutamate-1-semialdehyde 2,1-aminomutase of Psychrobacter sp. (strain PRwf-1).